A 176-amino-acid polypeptide reads, in one-letter code: MASTTSRSARPARRNNKASGNTTPLLWMAFALLVVVLDQFFKIVIVRTFTYGESRPVTRFFNLVLVYNKGAAFSFLADAGGWQRWFFTGLGLVVGAFIVWLLYRHTGQKLFCFAVSLILGGAVGNVVDRVVYGHVIDFLDFYVRNYHWPAFNVADCAITVGAVLLIVDELRRVRKH.

4 helical membrane-spanning segments follow: residues 26–46, 60–80, 82–102, and 107–127; these read LWMAFALLVVVLDQFFKIVIV, FFNLVLVYNKGAAFSFLADAG, WQRWFFTGLGLVVGAFIVWLL, and GQKLFCFAVSLILGGAVGNVV. Catalysis depends on residues aspartate 137 and aspartate 155. Residues 147-167 form a helical membrane-spanning segment; sequence HWPAFNVADCAITVGAVLLIV.

This sequence belongs to the peptidase A8 family.

It is found in the cell inner membrane. It catalyses the reaction Release of signal peptides from bacterial membrane prolipoproteins. Hydrolyzes -Xaa-Yaa-Zaa-|-(S,diacylglyceryl)Cys-, in which Xaa is hydrophobic (preferably Leu), and Yaa (Ala or Ser) and Zaa (Gly or Ala) have small, neutral side chains.. It functions in the pathway protein modification; lipoprotein biosynthesis (signal peptide cleavage). This protein specifically catalyzes the removal of signal peptides from prolipoproteins. The polypeptide is Lipoprotein signal peptidase (Cupriavidus pinatubonensis (strain JMP 134 / LMG 1197) (Cupriavidus necator (strain JMP 134))).